The following is an 824-amino-acid chain: MFSWSYLMGLVMVATATLSLARPSYNIAEDTTLEPEEPPTKYQISQPDVHSALPGESVELRCLLGDAIMVTWTKDGAQLVSNNRTLLIGPYLQIREAAPRDSGLYACGATRPLQSETRYFIVNITDGNSSGDDEDDNDGSEDFTNDNNHKRAPYWTNTEKLEKKLHAVPAANTVKFRCPAGGNPLPSMRWLKNGKEFKQEHRIGGFKVRSQHWSLIMESVVPSDKGNYTCIMENEYGSINHTYHLDVVERSPHPPILQAGLPANTTTKVGGDREFVCKVYSDAQPHIQWRHIELNGSKIGPDGNPYLKVLKAAGGNTTVKEIEVLYVRNVSFEDAGEYTCLAGNSIGISYHSAWLTVLPDEERQLDSSSSEYTEIAIYCVGGFLIACMIGTIMMCHMKGRGKKSDFSSQPAVHKLSKRLPLRRQVTVSADSSSSMNSNTPLVRITTRLLSNTDTHLLAGVSEYELPEDPKWEYPRDKLTLGKPLGEGCFGQVVMAEAVGIDKDRPKDAVTVAVKMLKDDATEKDLSDLVSEMEMMKMIGKHKNIINLLGACTQDGPLYVIVEYASKGNLREYLRTRRPPGMEYSFDIFRIPEEQMTFKDLVSCTYQLARGMEYLASQKCIHRDLAARNVLVTETNVIKIADFGLARDINNIDYYKKTTNGRLPVKWMAPEALFDRVYTLQSDVWSFGVLMWEIFTLGGSPYPGIPVEELFKLLKEGHRMVKPGNCTNELYTMMTDCWRAVPSQRPTFKQLVEDLDRILTQTTNEEYLDLNNPLEPYSPSYPDTRSSCSFGDDSVFSPDPMSMNLAFPNPNTQMAPLKHEATQPA.

The signal sequence occupies residues 1 to 21; that stretch reads MFSWSYLMGLVMVATATLSLA. Topologically, residues 22-374 are extracellular; sequence RPSYNIAEDT…LDSSSSEYTE (353 aa). The Ig-like C2-type 1 domain maps to 25 to 125; that stretch reads YNIAEDTTLE…ETRYFIVNIT (101 aa). An intrachain disulfide couples C62 to C107. N-linked (GlcNAc...) asparagine glycosylation is found at N83, N123, and N128. Residues 125 to 152 are disordered; sequence TDGNSSGDDEDDNDGSEDFTNDNNHKRA. Over residues 131-144 the composition is skewed to acidic residues; the sequence is GDDEDDNDGSEDFT. Ig-like C2-type domains are found at residues 153 to 246 and 254 to 356; these read PYWT…YHLD and PPIL…AWLT. Residues 160-177 form a heparin-binding region; sequence KLEKKLHAVPAANTVKFR. An intrachain disulfide couples C178 to C230. N-linked (GlcNAc...) asparagine glycans are attached at residues N227, N240, N264, N295, N316, and N329. C277 and C340 are joined by a disulfide. A helical membrane pass occupies residues 375–395; sequence IAIYCVGGFLIACMIGTIMMC. Topologically, residues 396 to 824 are cytoplasmic; it reads HMKGRGKKSD…PLKHEATQPA (429 aa). Residue Y463 is modified to Phosphotyrosine; by autocatalysis. A Protein kinase domain is found at 478–767; that stretch reads LTLGKPLGEG…LTQTTNEEYL (290 aa). ATP-binding positions include 484–492, K514, 562–564, and N568; these read LGEGCFGQV and EYA. The residue at position 583 (Y583) is a Phosphotyrosine; by autocatalysis. D623 acts as the Proton acceptor in catalysis. Phosphotyrosine; by autocatalysis occurs at positions 653, 654, and 766. The disordered stretch occupies residues 801–824; that stretch reads SMNLAFPNPNTQMAPLKHEATQPA.

This sequence belongs to the protein kinase superfamily. Tyr protein kinase family. Fibroblast growth factor receptor subfamily. As to quaternary structure, monomer. Homodimer after ligand binding. Post-translationally, autophosphorylated. Binding of FGF family members together with heparan sulfate proteoglycan or heparin promotes receptor dimerization and autophosphorylation on tyrosine residues. Autophosphorylation occurs in trans between the two FGFR molecules present in the dimer. In terms of processing, N-glycosylated in the endoplasmic reticulum. The N-glycan chains undergo further maturation to an Endo H-resistant form in the Golgi apparatus. Ubiquitinated. FGFR2 is rapidly ubiquitinated after autophosphorylation, leading to internalization and degradation. Subject to degradation both in lysosomes and by the proteasome.

The protein localises to the cell membrane. It is found in the golgi apparatus. It localises to the cytoplasmic vesicle. The enzyme catalyses L-tyrosyl-[protein] + ATP = O-phospho-L-tyrosyl-[protein] + ADP + H(+). Present in an inactive conformation in the absence of bound ligand. Ligand binding leads to dimerization and activation by autophosphorylation on tyrosine residues. Tyrosine-protein kinase that acts as a cell-surface receptor for fibroblast growth factors and plays an essential role in the regulation of cell proliferation, differentiation, migration and apoptosis, and in the regulation of embryonic development. Required for normal embryonic patterning, limb bud development, lung morphogenesis, osteogenesis and skin development. Plays an essential role in the regulation of osteoblast differentiation, proliferation and apoptosis, and is required for normal skeleton development. Promotes cell proliferation in keratinocytes and immature osteoblasts, but promotes apoptosis in differentiated osteoblasts. Phosphorylates PLCG1, FRS2 and PAK4. Ligand binding leads to the activation of several signaling cascades. Activation of PLCG1 leads to the production of the cellular signaling molecules diacylglycerol and inositol 1,4,5-trisphosphate. Phosphorylation of FRS2 triggers recruitment of GRB2, GAB1, PIK3R1 and SOS1, and mediates activation of RAS, MAPK1/ERK2, MAPK3/ERK1 and the MAP kinase signaling pathway, as well as of the AKT1 signaling pathway. FGFR2 signaling is down-regulated by ubiquitination, internalization and degradation. Mutations that lead to constitutive kinase activation or impair normal FGFR2 maturation, internalization and degradation lead to aberrant signaling. Over-expressed FGFR2 promotes activation of STAT1. The polypeptide is Fibroblast growth factor receptor 2 (FGFR2) (Pleurodeles waltl (Iberian ribbed newt)).